Here is an 860-residue protein sequence, read N- to C-terminus: Rod cGMP-specific 3',5'-cyclic phosphodiesterase subunit alpha (860 aa).

Residue Gly2 is modified to N-acetylglycine. 2 GAF domains span residues 73-222 (QTEK…NLIM) and 254-431 (DIER…GWSV). A PDEase domain is found at 483–816 (EEEELAEILQ…KEWKALADEY (334 aa)). The active-site Proton donor is His559. A divalent metal cation is bound by residues His563, His599, Asp600, and Asp720. Residues 821–860 (KVQEEKKQKQQSAKSAAAGNQPGGNPSPGGATTSKSCCIQ) are disordered. A compositionally biased stretch (low complexity) spans 830 to 851 (QQSAKSAAAGNQPGGNPSPGGA). At Cys857 the chain carries Cysteine methyl ester. Cys857 is lipidated: S-farnesyl cysteine. Positions 858-860 (CIQ) are cleaved as a propeptide — removed in mature form.

The protein belongs to the cyclic nucleotide phosphodiesterase family. Oligomer composed of two catalytic chains (alpha and beta), an inhibitory chain (gamma) and the delta chain. A divalent metal cation is required as a cofactor.

It is found in the cell membrane. The protein resides in the cell projection. The protein localises to the cilium. Its subcellular location is the photoreceptor outer segment. It carries out the reaction 3',5'-cyclic GMP + H2O = GMP + H(+). Its function is as follows. Rod-specific cGMP phosphodiesterase that catalyzes the hydrolysis of 3',5'-cyclic GMP. This protein participates in processes of transmission and amplification of the visual signal. The polypeptide is Rod cGMP-specific 3',5'-cyclic phosphodiesterase subunit alpha (Homo sapiens (Human)).